The chain runs to 155 residues: 3-hydroxyacyl-[acyl-carrier-protein] dehydratase FabZ (155 aa).

H59 is a catalytic residue.

This sequence belongs to the thioester dehydratase family. FabZ subfamily.

It localises to the cytoplasm. It catalyses the reaction a (3R)-hydroxyacyl-[ACP] = a (2E)-enoyl-[ACP] + H2O. Functionally, involved in unsaturated fatty acids biosynthesis. Catalyzes the dehydration of short chain beta-hydroxyacyl-ACPs and long chain saturated and unsaturated beta-hydroxyacyl-ACPs. The chain is 3-hydroxyacyl-[acyl-carrier-protein] dehydratase FabZ from Bartonella quintana (strain Toulouse) (Rochalimaea quintana).